A 556-amino-acid chain; its full sequence is MKTDIEIAQSVELKPITEVVEKVGIGFDDLELYGKYKAKLSFDKINEVKDDKPGKLILVTAINPTPAGEGKSTISIGLADALNKIGKKTMIALREPSLGPVMGIKGGAAGGGYAQVLPMEDINLHFTGDMHAITTANNALSALLDNHIHQGNALGIDQRRIIWKRVVDLNDRALRHVTVGLGGPLNGIPREDGFDITVASEIMAILCLATDINDLKERLANIVVAYRYDRTPVYVRDLEIEGALTLILKDAIKPNLVQTIYGTPALVHGGPFANIAHGCNSVLATSTALRLADYTVTEAGFGADLGAEKFLDIKTPNLPTTPDAVVIVATLRALKMHGGVAKTDLSEENVQAVRDGFSNLKRHVENIRKFGIPVVVAINEFVADTEAEIAALKELCSEIKVPVELASVWANGADGGIDLANTVVDVVENGNADYKRLYSDDDSLEEKITKIVTEIYGGKSVVFEKKAKNQLKQFAEFGWDKLPVCMAKTQYSFSDNQFLLGAPEGFDITIREFVPKTGAGFIVALTGDVMTMPGLPKAPAALKMDVTEDGTAVGLF.

65 to 72 (TPAGEGKS) is a binding site for ATP.

It belongs to the formate--tetrahydrofolate ligase family.

The catalysed reaction is (6S)-5,6,7,8-tetrahydrofolate + formate + ATP = (6R)-10-formyltetrahydrofolate + ADP + phosphate. It functions in the pathway one-carbon metabolism; tetrahydrofolate interconversion. In Streptococcus thermophilus (strain ATCC BAA-250 / LMG 18311), this protein is Formate--tetrahydrofolate ligase.